The sequence spans 88 residues: Large ribosomal subunit protein bL27 (88 aa).

Residues 1–21 (MAHKKGTGSTRNGRDSRAQRL) form a disordered region.

Belongs to the bacterial ribosomal protein bL27 family.

The sequence is that of Large ribosomal subunit protein bL27 from Picosynechococcus sp. (strain ATCC 27264 / PCC 7002 / PR-6) (Agmenellum quadruplicatum).